Reading from the N-terminus, the 238-residue chain is Ribitol-5-phosphate cytidylyltransferase 2 (238 aa).

CTP contacts are provided by residues 7–10 (LAGG) and 81–87 (GTDRNET).

Belongs to the IspD/TarI cytidylyltransferase family. TarI subfamily.

It catalyses the reaction D-ribitol 5-phosphate + CTP + H(+) = CDP-L-ribitol + diphosphate. The protein operates within cell wall biogenesis; poly(ribitol phosphate) teichoic acid biosynthesis. Catalyzes the transfer of the cytidylyl group of CTP to D-ribitol 5-phosphate. This Staphylococcus aureus (strain bovine RF122 / ET3-1) protein is Ribitol-5-phosphate cytidylyltransferase 2.